A 191-amino-acid chain; its full sequence is Auxin-responsive protein IAA32 (191 aa).

An EAR-like (transcriptional repression) motif is present at residues 32–36; the sequence is LGLSL. The region spanning 98–184 is the PB1 domain; that stretch reads YAYVKVNLDG…SVDRMRIARR (87 aa).

The protein belongs to the Aux/IAA family. In terms of assembly, homodimers and heterodimers.

It localises to the nucleus. Aux/IAA proteins are short-lived transcriptional factors that function as repressors of early auxin response genes at low auxin concentrations. Repression is thought to result from the interaction with auxin response factors (ARFs), proteins that bind to the auxin-responsive promoter element (AuxRE). Formation of heterodimers with ARF proteins may alter their ability to modulate early auxin response genes expression. This Arabidopsis thaliana (Mouse-ear cress) protein is Auxin-responsive protein IAA32.